We begin with the raw amino-acid sequence, 358 residues long: scyllo-inositol 2-dehydrogenase (NADP(+)) IolW (358 aa).

It belongs to the Gfo/Idh/MocA family.

It carries out the reaction scyllo-inositol + NADP(+) = scyllo-inosose + NADPH + H(+). Functionally, catalyzes the reversible NADPH-dependent reduction of scyllo-inosose (SIS) to scyllo-inositol (SI). Cannot use NADH instead of NADPH. May be involved in reduction of not only SIS but also various oxidized compounds manifested upon stressful conditions. This is scyllo-inositol 2-dehydrogenase (NADP(+)) IolW from Bacillus subtilis (strain 168).